The primary structure comprises 256 residues: Thiazole synthase (256 aa).

K96 acts as the Schiff-base intermediate with DXP in catalysis. 1-deoxy-D-xylulose 5-phosphate-binding positions include G157, 183–184, and 205–206; these read AG and NT.

The protein belongs to the ThiG family. Homotetramer. Forms heterodimers with either ThiH or ThiS.

The protein localises to the cytoplasm. The catalysed reaction is [ThiS sulfur-carrier protein]-C-terminal-Gly-aminoethanethioate + 2-iminoacetate + 1-deoxy-D-xylulose 5-phosphate = [ThiS sulfur-carrier protein]-C-terminal Gly-Gly + 2-[(2R,5Z)-2-carboxy-4-methylthiazol-5(2H)-ylidene]ethyl phosphate + 2 H2O + H(+). Its pathway is cofactor biosynthesis; thiamine diphosphate biosynthesis. Catalyzes the rearrangement of 1-deoxy-D-xylulose 5-phosphate (DXP) to produce the thiazole phosphate moiety of thiamine. Sulfur is provided by the thiocarboxylate moiety of the carrier protein ThiS. In vitro, sulfur can be provided by H(2)S. This chain is Thiazole synthase, found in Clostridium beijerinckii (strain ATCC 51743 / NCIMB 8052) (Clostridium acetobutylicum).